Consider the following 183-residue polypeptide: Hypoxanthine/guanine phosphoribosyltransferase (183 aa).

This sequence belongs to the purine/pyrimidine phosphoribosyltransferase family. Archaeal HPRT subfamily. Homodimer.

Its subcellular location is the cytoplasm. It catalyses the reaction IMP + diphosphate = hypoxanthine + 5-phospho-alpha-D-ribose 1-diphosphate. The catalysed reaction is GMP + diphosphate = guanine + 5-phospho-alpha-D-ribose 1-diphosphate. It functions in the pathway purine metabolism; IMP biosynthesis via salvage pathway; IMP from hypoxanthine: step 1/1. In terms of biological role, catalyzes a salvage reaction resulting in the formation of IMP that is energically less costly than de novo synthesis. This Methanothermococcus okinawensis (strain DSM 14208 / JCM 11175 / IH1) protein is Hypoxanthine/guanine phosphoribosyltransferase.